Reading from the N-terminus, the 285-residue chain is Probable endonuclease 4 (285 aa).

9 residues coordinate Zn(2+): His-69, His-109, Glu-145, Asp-179, His-182, His-216, Asp-229, His-231, and Glu-261.

This sequence belongs to the AP endonuclease 2 family. Zn(2+) serves as cofactor.

It catalyses the reaction Endonucleolytic cleavage to 5'-phosphooligonucleotide end-products.. Functionally, endonuclease IV plays a role in DNA repair. It cleaves phosphodiester bonds at apurinic or apyrimidinic (AP) sites, generating a 3'-hydroxyl group and a 5'-terminal sugar phosphate. In Salmonella schwarzengrund (strain CVM19633), this protein is Probable endonuclease 4.